We begin with the raw amino-acid sequence, 365 residues long: Putative chalcone synthase (365 aa).

Cysteine 144 is a catalytic residue.

This sequence belongs to the thiolase-like superfamily. Chalcone/stilbene synthases family.

The catalysed reaction is (E)-4-coumaroyl-CoA + 3 malonyl-CoA + 3 H(+) = 2',4,4',6'-tetrahydroxychalcone + 3 CO2 + 4 CoA. This is Putative chalcone synthase (bcsA) from Bacillus subtilis (strain 168).